The primary structure comprises 247 residues: Protein AC124 (247 aa).

Its subcellular location is the host cytoplasm. The protein localises to the host nucleus. Accelerates mortality in insect larvae. The polypeptide is Protein AC124 (Lepidoptera (butterflies and moths)).